The chain runs to 372 residues: MEILMTVSKFASFCTMGANASALEKEIGSEQFPVNEHYFGLVNFGNTCYCNSVLQALYFCRPFREKILAYRSQPRRKENLLTCLADLFHSIANQKRKVGVIPPKKFITRLRKENELFDNYMQQDAHEFLNYLLNTIADLLQEERKQDKTNGRLANGSLDSQNHNSNAPPPSTWVHEIFQGTLTNETRCLTCETISSKDEDFLDLSVDVEQNTSITHCLRGFSNTETLCSEYKYYCEECRSKQEAHKRMRVKKLPMILALHLKRFKYMEQLQRYTKLSYRVVFPLELRLFNTSGDATNPERLYDLVAVVVHCGSGPNRGHYIAIVKSHDFWLLFDDDIVEKIDAQAIEEFYGLTSEISKNSESGYILFYQSRD.

The USP domain maps to 39–371 (FGLVNFGNTC…SGYILFYQSR (333 aa)). The active-site Nucleophile is cysteine 48. The disordered stretch occupies residues 150–169 (NGRLANGSLDSQNHNSNAPP). Residues 157–166 (SLDSQNHNSN) show a composition bias toward polar residues. Cysteine 188, cysteine 191, cysteine 235, and cysteine 238 together coordinate Zn(2+). Histidine 319 (proton acceptor) is an active-site residue.

This sequence belongs to the peptidase C19 family. USP12/USP46 subfamily. As to quaternary structure, interacts with WDR48.

The catalysed reaction is Thiol-dependent hydrolysis of ester, thioester, amide, peptide and isopeptide bonds formed by the C-terminal Gly of ubiquitin (a 76-residue protein attached to proteins as an intracellular targeting signal).. Deubiquitinating enzyme. Has almost no deubiquitinating activity by itself and requires the interaction with wdr48 to have a high activity. The sequence is that of Ubiquitin carboxyl-terminal hydrolase 12 (usp12) from Salmo salar (Atlantic salmon).